The chain runs to 346 residues: tRNA N6-adenosine threonylcarbamoyltransferase (346 aa).

Histidine 111 and histidine 115 together coordinate Fe cation. Substrate contacts are provided by residues 134–138 (LVSGG), aspartate 167, glycine 180, aspartate 184, and asparagine 279. Fe cation is bound at residue aspartate 307.

This sequence belongs to the KAE1 / TsaD family. Fe(2+) serves as cofactor.

It localises to the cytoplasm. It carries out the reaction L-threonylcarbamoyladenylate + adenosine(37) in tRNA = N(6)-L-threonylcarbamoyladenosine(37) in tRNA + AMP + H(+). Required for the formation of a threonylcarbamoyl group on adenosine at position 37 (t(6)A37) in tRNAs that read codons beginning with adenine. Is involved in the transfer of the threonylcarbamoyl moiety of threonylcarbamoyl-AMP (TC-AMP) to the N6 group of A37, together with TsaE and TsaB. TsaD likely plays a direct catalytic role in this reaction. This chain is tRNA N6-adenosine threonylcarbamoyltransferase, found in Nostoc sp. (strain PCC 7120 / SAG 25.82 / UTEX 2576).